The primary structure comprises 421 residues: Gamma-glutamyl phosphate reductase (421 aa).

The protein belongs to the gamma-glutamyl phosphate reductase family.

The protein localises to the cytoplasm. It catalyses the reaction L-glutamate 5-semialdehyde + phosphate + NADP(+) = L-glutamyl 5-phosphate + NADPH + H(+). It participates in amino-acid biosynthesis; L-proline biosynthesis; L-glutamate 5-semialdehyde from L-glutamate: step 2/2. Functionally, catalyzes the NADPH-dependent reduction of L-glutamate 5-phosphate into L-glutamate 5-semialdehyde and phosphate. The product spontaneously undergoes cyclization to form 1-pyrroline-5-carboxylate. The sequence is that of Gamma-glutamyl phosphate reductase from Herminiimonas arsenicoxydans.